The following is a 358-amino-acid chain: 3-dehydroquinate synthase (358 aa).

Residues 104–108, 128–129, K140, K149, and 167–170 contribute to the NAD(+) site; these read GVIGD, TT, and FLNT. E182, H246, and H260 together coordinate Zn(2+).

This sequence belongs to the sugar phosphate cyclases superfamily. Dehydroquinate synthase family. The cofactor is Co(2+). Zn(2+) serves as cofactor. NAD(+) is required as a cofactor.

Its subcellular location is the cytoplasm. The enzyme catalyses 7-phospho-2-dehydro-3-deoxy-D-arabino-heptonate = 3-dehydroquinate + phosphate. The protein operates within metabolic intermediate biosynthesis; chorismate biosynthesis; chorismate from D-erythrose 4-phosphate and phosphoenolpyruvate: step 2/7. Catalyzes the conversion of 3-deoxy-D-arabino-heptulosonate 7-phosphate (DAHP) to dehydroquinate (DHQ). This Staphylococcus carnosus (strain TM300) protein is 3-dehydroquinate synthase.